The primary structure comprises 30 residues: M-poneritoxin-Nc3a (30 aa).

The protein belongs to the ponericin-G family. In terms of tissue distribution, expressed by the venom gland.

The protein resides in the secreted. The protein localises to the target cell membrane. Its function is as follows. Membrane-perturbating peptide with multiple activities. It is insecticidal, since it induces contractile paralysis in insects (L.cuprina) during several hours and death after 24 hours. It shows a relatively strong and broad-spectrum antibacterial activity against both Gram-positive and Gram-negative bacteria (MIC&lt;20 uM). It is also antiparasitic, since it potently inhibits the larval development of the major pathogenic nematode of ruminants (H.contortus, IC(50)=5.6 uM) and reduces the motility of adult males of the other nematode B.malayi. It also shows cytotoxic activity against HEK293 cells (EC(50)=5-7 uM) but does not induce hemolysis in human erythrocytes. In addition, it causes a moderate increase in intracellular calcium concentration on neuronal and epithelial cell lines, which supports a non-specific membrane perturbation mechanism of action. In vivo, it induces pain by intraplantar injection into mice, suggesting a defensive function against vertebrate predators. This Neoponera commutata (Large hunting ant) protein is M-poneritoxin-Nc3a.